Reading from the N-terminus, the 384-residue chain is Lipid-A-disaccharide synthase 1 (384 aa).

The protein belongs to the LpxB family.

The catalysed reaction is a lipid X + a UDP-2-N,3-O-bis[(3R)-3-hydroxyacyl]-alpha-D-glucosamine = a lipid A disaccharide + UDP + H(+). It functions in the pathway bacterial outer membrane biogenesis; LPS lipid A biosynthesis. Condensation of UDP-2,3-diacylglucosamine and 2,3-diacylglucosamine-1-phosphate to form lipid A disaccharide, a precursor of lipid A, a phosphorylated glycolipid that anchors the lipopolysaccharide to the outer membrane of the cell. The polypeptide is Lipid-A-disaccharide synthase 1 (Legionella pneumophila subsp. pneumophila (strain Philadelphia 1 / ATCC 33152 / DSM 7513)).